A 796-amino-acid chain; its full sequence is Protein SEY1 homolog (796 aa).

Residues 1-701 (MESSNDFSNK…AGTSISSWRN (701 aa)) lie on the Cytoplasmic side of the membrane. The GB1/RHD3-type G domain maps to 46–280 (GFRFNVVTIL…VPSDGFFVYS (235 aa)). 56–63 (GSQSSGKS) is a GTP binding site. Residues 554-626 (SLVLLLKAAR…DALTLLKVLK (73 aa)) are a coiled coil. Residues 702 to 722 (IPPIFWLVLLVLGWNELRSVF) traverse the membrane as a helical segment. At 723–725 (KVL) the chain is on the lumenal side. Residues 726–746 (LRFYVVIPLLIVFYFTFSYSA) traverse the membrane as a helical segment. The Cytoplasmic segment spans residues 747 to 796 (TKLLGPKADQYVKPVRDKVLSLFTALLAWFVRTLHMIASKSSSFKQRPAT).

This sequence belongs to the TRAFAC class dynamin-like GTPase superfamily. GB1/RHD3 GTPase family. RHD3 subfamily.

The protein resides in the endoplasmic reticulum membrane. Functionally, probable GTP-binding protein that may be involved in cell development. This Theileria parva (East coast fever infection agent) protein is Protein SEY1 homolog.